A 188-amino-acid chain; its full sequence is uncharacterized protein (188 aa).

The N-terminal stretch at methionine 1–glycine 18 is a signal peptide. The N-palmitoyl cysteine moiety is linked to residue cysteine 19. Cysteine 19 carries the S-diacylglycerol cysteine lipid modification.

Its subcellular location is the cell membrane. This is an uncharacterized protein from Sinorhizobium fredii (strain NBRC 101917 / NGR234).